The primary structure comprises 319 residues: tRNA-cytidine(32) 2-sulfurtransferase (319 aa).

Residues 45–50 (SGGKDS) carry the PP-loop motif motif. 3 residues coordinate [4Fe-4S] cluster: C120, C123, and C211.

It belongs to the TtcA family. In terms of assembly, homodimer. It depends on Mg(2+) as a cofactor. Requires [4Fe-4S] cluster as cofactor.

The protein localises to the cytoplasm. It carries out the reaction cytidine(32) in tRNA + S-sulfanyl-L-cysteinyl-[cysteine desulfurase] + AH2 + ATP = 2-thiocytidine(32) in tRNA + L-cysteinyl-[cysteine desulfurase] + A + AMP + diphosphate + H(+). Its pathway is tRNA modification. Catalyzes the ATP-dependent 2-thiolation of cytidine in position 32 of tRNA, to form 2-thiocytidine (s(2)C32). The sulfur atoms are provided by the cysteine/cysteine desulfurase (IscS) system. The chain is tRNA-cytidine(32) 2-sulfurtransferase from Shewanella woodyi (strain ATCC 51908 / MS32).